A 200-amino-acid chain; its full sequence is Small ribosomal subunit protein eS8A (200 aa).

2 disordered regions span residues 1 to 40 (MGITRDSRHKRSATGAKRAQYRKKRKFELGRQPSNTRIGP) and 123 to 145 (SKGKKATSTPNPKSKHVQRKHSA). The segment covering 135-145 (KSKHVQRKHSA) has biased composition (basic residues).

Belongs to the eukaryotic ribosomal protein eS8 family. As to quaternary structure, component of the small ribosomal subunit (SSU). Mature yeast ribosomes consist of a small (40S) and a large (60S) subunit. The 40S small subunit contains 1 molecule of ribosomal RNA (18S rRNA) and at least 33 different proteins. The large 60S subunit contains 3 rRNA molecules (25S, 5.8S and 5S rRNA) and at least 46 different proteins.

The protein localises to the cytoplasm. Functionally, component of the ribosome, a large ribonucleoprotein complex responsible for the synthesis of proteins in the cell. The small ribosomal subunit (SSU) binds messenger RNAs (mRNAs) and translates the encoded message by selecting cognate aminoacyl-transfer RNA (tRNA) molecules. The large subunit (LSU) contains the ribosomal catalytic site termed the peptidyl transferase center (PTC), which catalyzes the formation of peptide bonds, thereby polymerizing the amino acids delivered by tRNAs into a polypeptide chain. The nascent polypeptides leave the ribosome through a tunnel in the LSU and interact with protein factors that function in enzymatic processing, targeting, and the membrane insertion of nascent chains at the exit of the ribosomal tunnel. This chain is Small ribosomal subunit protein eS8A (rps801), found in Schizosaccharomyces pombe (strain 972 / ATCC 24843) (Fission yeast).